Here is a 284-residue protein sequence, read N- to C-terminus: Large ribosomal subunit protein uL2 (284 aa).

2 disordered regions span residues 28 to 50 (ELKGSSSRRSVRPNKKLSFFKKS) and 232 to 284 (RGTA…DRRK). Positions 36-46 (RSVRPNKKLSF) are enriched in basic residues. Positions 240–250 (DHPHGGGEGRH) are enriched in basic and acidic residues. Over residues 264-284 (KGLKTRDKRKSNKWIVKDRRK) the composition is skewed to basic residues.

This sequence belongs to the universal ribosomal protein uL2 family. In terms of assembly, part of the 50S ribosomal subunit. Forms a bridge to the 30S subunit in the 70S ribosome.

Functionally, one of the primary rRNA binding proteins. Required for association of the 30S and 50S subunits to form the 70S ribosome, for tRNA binding and peptide bond formation. It has been suggested to have peptidyltransferase activity; this is somewhat controversial. Makes several contacts with the 16S rRNA in the 70S ribosome. The sequence is that of Large ribosomal subunit protein uL2 from Chlamydia trachomatis serovar L2 (strain ATCC VR-902B / DSM 19102 / 434/Bu).